Consider the following 144-residue polypeptide: Oleosin H2 (144 aa).

Residue Ala-2 is modified to N-acetylalanine. Transmembrane regions (helical) follow at residues 28–48, 53–73, and 75–95; these read VLAV…AGLI, IIGL…LVPA, and LTIA…ITAL. Residues 61–72 carry the Proline-knot motif; it reads PLFVIFSPILVP. Residues 124–144 are disordered; it reads QETVGQKTREAGQRSQDVIRP.

The protein belongs to the oleosin family. In terms of tissue distribution, expressed in seeds (at protein level).

It is found in the lipid droplet. It localises to the membrane. Functionally, may have a structural role to stabilize the lipid body during desiccation of the seed by preventing coalescence of the oil. Probably interacts with both lipid and phospholipid moieties of lipid bodies. May also provide recognition signals for specific lipase anchorage in lipolysis during seedling growth. The polypeptide is Oleosin H2 (Sesamum indicum (Oriental sesame)).